A 117-amino-acid chain; its full sequence is Immunoglobulin lambda variable 2 (117 aa).

Positions 1–19 (MAWTSLILSLLALCSGASS) are cleaved as a signal peptide. Pyrrolidone carboxylic acid is present on glutamine 20. The region spanning 20–117 (QAVVTQESAL…FCALWYSTHF (98 aa)) is the Ig-like domain.

The chain is Immunoglobulin lambda variable 2 from Mus musculus (Mouse).